Here is a 483-residue protein sequence, read N- to C-terminus: tRNA sulfurtransferase (483 aa).

Residues 62–166 (PEICDALTRI…QDKLILVKAR (105 aa)) form the THUMP domain. ATP-binding positions include 184–185 (LI), K266, G288, and Q297. Residues C345 and C457 are joined by a disulfide bond. Positions 405–483 (LADTDVLLDI…GYTNVKVYRP (79 aa)) constitute a Rhodanese domain. Catalysis depends on C457, which acts as the Cysteine persulfide intermediate.

This sequence belongs to the ThiI family.

It localises to the cytoplasm. The catalysed reaction is [ThiI sulfur-carrier protein]-S-sulfanyl-L-cysteine + a uridine in tRNA + 2 reduced [2Fe-2S]-[ferredoxin] + ATP + H(+) = [ThiI sulfur-carrier protein]-L-cysteine + a 4-thiouridine in tRNA + 2 oxidized [2Fe-2S]-[ferredoxin] + AMP + diphosphate. It catalyses the reaction [ThiS sulfur-carrier protein]-C-terminal Gly-Gly-AMP + S-sulfanyl-L-cysteinyl-[cysteine desulfurase] + AH2 = [ThiS sulfur-carrier protein]-C-terminal-Gly-aminoethanethioate + L-cysteinyl-[cysteine desulfurase] + A + AMP + 2 H(+). It participates in cofactor biosynthesis; thiamine diphosphate biosynthesis. Catalyzes the ATP-dependent transfer of a sulfur to tRNA to produce 4-thiouridine in position 8 of tRNAs, which functions as a near-UV photosensor. Also catalyzes the transfer of sulfur to the sulfur carrier protein ThiS, forming ThiS-thiocarboxylate. This is a step in the synthesis of thiazole, in the thiamine biosynthesis pathway. The sulfur is donated as persulfide by IscS. This chain is tRNA sulfurtransferase, found in Yersinia pseudotuberculosis serotype O:1b (strain IP 31758).